The primary structure comprises 870 residues: LPS-assembly protein LptD (870 aa).

A signal peptide spans 1–25 (MKQGKSFIFYCLVLLLCGFQQLSSA).

It belongs to the LptD family. As to quaternary structure, component of the lipopolysaccharide transport and assembly complex. Interacts with LptE and LptA.

Its subcellular location is the cell outer membrane. Its function is as follows. Together with LptE, is involved in the assembly of lipopolysaccharide (LPS) at the surface of the outer membrane. The chain is LPS-assembly protein LptD from Coxiella burnetii (strain RSA 493 / Nine Mile phase I).